The sequence spans 82 residues: UPF0154 protein SPD_1662 (82 aa).

Residues 5–25 traverse the membrane as a helical segment; it reads LAIVLIVLAFLGGALGGMYLV.

Belongs to the UPF0154 family.

The protein resides in the cell membrane. This Streptococcus pneumoniae serotype 2 (strain D39 / NCTC 7466) protein is UPF0154 protein SPD_1662.